Consider the following 338-residue polypeptide: Fructose-1,6-bisphosphatase class 1 1 (338 aa).

Mg(2+) is bound by residues Glu94, Asp116, Leu118, and Asp119. Residues 119-122 (DGSS), Asn210, and Lys276 contribute to the substrate site. Position 282 (Glu282) interacts with Mg(2+).

Belongs to the FBPase class 1 family. Homotetramer. Mg(2+) is required as a cofactor.

The protein resides in the cytoplasm. It catalyses the reaction beta-D-fructose 1,6-bisphosphate + H2O = beta-D-fructose 6-phosphate + phosphate. The protein operates within carbohydrate biosynthesis; gluconeogenesis. In Paraburkholderia xenovorans (strain LB400), this protein is Fructose-1,6-bisphosphatase class 1 1.